Consider the following 210-residue polypeptide: Chaperone protein TorD (210 aa).

The protein belongs to the TorD/DmsD family. TorD subfamily.

Its subcellular location is the cytoplasm. Its function is as follows. Involved in the biogenesis of TorA. Acts on TorA before the insertion of the molybdenum cofactor and, as a result, probably favors a conformation of the apoenzyme that is competent for acquiring the cofactor. The chain is Chaperone protein TorD from Salmonella schwarzengrund (strain CVM19633).